The following is a 1777-amino-acid chain: Fatty acid synthase subunit alpha (1777 aa).

The segment at 101–124 (APVESADNEPAQPAASSTPAAPAP) is disordered. Over residues 110-120 (PAQPAASSTPA) the composition is skewed to low complexity. Positions 151 to 237 (LSAIDVVISI…KVMGGHIDRL (87 aa)) constitute a Carrier domain. Residue serine 186 is modified to O-(pantetheine 4'-phosphoryl)serine. The ketoreductase (KR) domain stretch occupies residues 563 to 803 (FTGRRVLVTG…ILSLLSGDIL (241 aa)). Positions 1007–1539 (KEIMHEVVID…QKGGLVVGIA (533 aa)) constitute a Ketosynthase family 3 (KS3) domain. Residues cysteine 1193, histidine 1424, and histidine 1465 each act as for beta-ketoacyl synthase activity in the active site. Aspartate 1661 is a Mg(2+) binding site. Acetyl-CoA-binding positions include 1661–1663 (DIE), 1706–1716 (EAIFKSLQIPS), 1730–1734 (SNGAQ), and 1760–1762 (ITH).

It belongs to the thiolase-like superfamily. Fungal fatty acid synthetase subunit alpha family. Fatty acid synthase is composed of alpha and beta subunits.

It catalyses the reaction acetyl-CoA + n malonyl-CoA + 2n NADPH + 4n H(+) = a long-chain-acyl-CoA + n CoA + n CO2 + 2n NADP(+).. The enzyme catalyses a fatty acyl-[ACP] + malonyl-[ACP] + H(+) = a 3-oxoacyl-[ACP] + holo-[ACP] + CO2. It carries out the reaction a (3R)-hydroxyacyl-[ACP] + NADP(+) = a 3-oxoacyl-[ACP] + NADPH + H(+). It participates in secondary metabolite biosynthesis. In terms of biological role, fatty acid synthase alpha subunit; part of the gene cluster that mediates the biosynthesis of oryzines, natural products with an unusual maleidride backbone. The two subunits of the fungal fatty acid synthase oryfasA and oryfasB probably form octenoic acid. This fatty acid is most likely activated by the acyl-CoA ligase oryP to give octenyl-CoA before the citrate synthase-like protein oryE catalyzes condensation with oxaloacetate to form tricarboxylic acid. The next steps of the pathways are conjectural, but a favorite possible route has been proposed, beginning with decarboxylation and concomitant dehydration by the decarboxylase oryM, followed by tautomerization, which may lead to the production of a diene intermediate. Reduction of this diene intermediate could give the known metabolite piliformic acid. On the pathway to oryzine B and oryzine A, however, hydroxylation of the diene by the alpha-ketoglutarate-dependent dioxygenase oryG and lactonisation by the lactonohydrolases oryH or oryL could give oryzine B directly. Finally, enoyl reduction by the dehydrogenase oryD would then convert oryzine B into oryzine A. The polypeptide is Fatty acid synthase subunit alpha (Aspergillus oryzae (strain ATCC 42149 / RIB 40) (Yellow koji mold)).